The chain runs to 159 residues: Phosphopantetheine adenylyltransferase (159 aa).

Residue T10 participates in substrate binding. ATP contacts are provided by residues 10-11 (TF) and H18. Substrate is bound by residues K42, M74, and R88. ATP contacts are provided by residues 89 to 91 (GLR), E99, and 124 to 130 (WSFISSS).

The protein belongs to the bacterial CoaD family. As to quaternary structure, homohexamer. The cofactor is Mg(2+).

The protein localises to the cytoplasm. The enzyme catalyses (R)-4'-phosphopantetheine + ATP + H(+) = 3'-dephospho-CoA + diphosphate. It functions in the pathway cofactor biosynthesis; coenzyme A biosynthesis; CoA from (R)-pantothenate: step 4/5. Reversibly transfers an adenylyl group from ATP to 4'-phosphopantetheine, yielding dephospho-CoA (dPCoA) and pyrophosphate. The protein is Phosphopantetheine adenylyltransferase of Salmonella choleraesuis (strain SC-B67).